Consider the following 156-residue polypeptide: Small ribosomal subunit protein uS7 (156 aa).

The protein belongs to the universal ribosomal protein uS7 family. As to quaternary structure, part of the 30S ribosomal subunit. Contacts proteins S9 and S11.

In terms of biological role, one of the primary rRNA binding proteins, it binds directly to 16S rRNA where it nucleates assembly of the head domain of the 30S subunit. Is located at the subunit interface close to the decoding center, probably blocks exit of the E-site tRNA. This is Small ribosomal subunit protein uS7 from Shewanella denitrificans (strain OS217 / ATCC BAA-1090 / DSM 15013).